Reading from the N-terminus, the 601-residue chain is A-type ATP synthase subunit A (601 aa).

Residue 236–243 (GPFGSGKT) participates in ATP binding.

It belongs to the ATPase alpha/beta chains family. Has multiple subunits with at least A(3), B(3), C, D, E, F, H, I and proteolipid K(x).

It localises to the cell membrane. It carries out the reaction ATP + H2O + 4 H(+)(in) = ADP + phosphate + 5 H(+)(out). Its function is as follows. Component of the A-type ATP synthase that produces ATP from ADP in the presence of a proton gradient across the membrane. The A chain is the catalytic subunit. The sequence is that of A-type ATP synthase subunit A from Hyperthermus butylicus (strain DSM 5456 / JCM 9403 / PLM1-5).